Here is a 709-residue protein sequence, read N- to C-terminus: Polyribonucleotide nucleotidyltransferase (709 aa).

Residues Asp485 and Asp491 each coordinate Mg(2+). Positions 552 to 611 (PRIHTMKIDPKKIKDVIGKGGATIRALTEETGTSIDIDDDGTVKIAATDNNAAKRVMERI) constitute a KH domain. One can recognise an S1 motif domain in the interval 621 to 689 (NAIYKGKVTR…RQGRIRLTMK (69 aa)).

This sequence belongs to the polyribonucleotide nucleotidyltransferase family. In terms of assembly, component of the RNA degradosome, which is a multiprotein complex involved in RNA processing and mRNA degradation. Mg(2+) is required as a cofactor.

The protein resides in the cytoplasm. It carries out the reaction RNA(n+1) + phosphate = RNA(n) + a ribonucleoside 5'-diphosphate. Its function is as follows. Involved in mRNA degradation. Catalyzes the phosphorolysis of single-stranded polyribonucleotides processively in the 3'- to 5'-direction. The sequence is that of Polyribonucleotide nucleotidyltransferase from Glaesserella parasuis serovar 5 (strain SH0165) (Haemophilus parasuis).